Reading from the N-terminus, the 513-residue chain is Bone morphogenetic protein 6 (513 aa).

The first 20 residues, 1-20 (MPGLGRRAQWLCWWWGLLCS), serve as a signal peptide directing secretion. Positions 21–374 (CCGPPPLRPP…VSEVHVRTTR (354 aa)) are excised as a propeptide. Disordered stretches follow at residues 38 to 66 (AAGG…SSGF), 89 to 131 (LPHR…RLKS), and 145 to 200 (ADND…ASPL). A compositionally biased stretch (low complexity) spans 98-121 (GLQQPQPPALRQQEEQQQQQQLPR). The span at 158-172 (QQSWPHEAASSSQRR) shows a compositional bias: polar residues. N-linked (GlcNAc...) asparagine glycosylation is found at Asn241, Asn269, Asn386, Asn404, and Asn454. The interval 373–398 (TRSASSRRRQQSRNRSTQSQDVARVS) is disordered. Cystine bridges form between Cys412-Cys478, Cys441-Cys510, and Cys445-Cys512.

Belongs to the TGF-beta family. In terms of assembly, interacts with SOSTDC1. Interacts (when glycosylated) with type I receptor ACVR1; the interaction may induce HAMP expression. Interacts with type II receptor ACVR2B. Interacts with Hemojuvelin/HJV. Interacts with ERFE; the interaction inhibits BMP-induced transcription of HAMP. Interacts with BMPR1A/ALK3. Forms heterodimers with BMP2 in vitro; the heterodimer then binds to its receptor BMPR1A /ALK3 and may induce HAMP expression. Glycosylated at Asn-454. Glycosylation is crucial for recognition by the activin receptor type I/ACVR1.

It is found in the secreted. In terms of biological role, growth factor of the TGF-beta superfamily that plays essential roles in many developmental processes including cartilage and bone formation. Also plays an important role in the regulation of HAMP/hepcidin expression and iron metabolism by acting as a ligand for hemojuvelin/HJV. Also acts to promote expression of HAMP, potentially via the interaction with its receptor BMPR1A/ALK3. Initiates the canonical BMP signaling cascade by associating with type I receptor ACVR1 and type II receptor ACVR2B. In turn, ACVR1 propagates signal by phosphorylating SMAD1/5/8 that travel to the nucleus and act as activators and repressors of transcription of target. Can also signal through non-canonical pathway such as TAZ-Hippo signaling cascade to modulate VEGF signaling by regulating VEGFR2 expression. The protein is Bone morphogenetic protein 6 (BMP6) of Homo sapiens (Human).